The following is a 550-amino-acid chain: Arginine--tRNA ligase (550 aa).

Residues 130-140 (ANPTGPIHLGG) carry the 'HIGH' region motif.

Belongs to the class-I aminoacyl-tRNA synthetase family. In terms of assembly, monomer.

The protein resides in the cytoplasm. The enzyme catalyses tRNA(Arg) + L-arginine + ATP = L-arginyl-tRNA(Arg) + AMP + diphosphate. The protein is Arginine--tRNA ligase of Corynebacterium diphtheriae (strain ATCC 700971 / NCTC 13129 / Biotype gravis).